We begin with the raw amino-acid sequence, 213 residues long: Small ribosomal subunit protein eS1 (213 aa).

Residues 189–213 (ARPEEVAAEEETAVDVDEEDVDVEA) are disordered. Over residues 194–213 (VAAEEETAVDVDEEDVDVEA) the composition is skewed to acidic residues.

The protein belongs to the eukaryotic ribosomal protein eS1 family.

The sequence is that of Small ribosomal subunit protein eS1 from Haloarcula marismortui (strain ATCC 43049 / DSM 3752 / JCM 8966 / VKM B-1809) (Halobacterium marismortui).